Reading from the N-terminus, the 550-residue chain is Solute carrier family 22 member 6 (550 aa).

The Cytoplasmic portion of the chain corresponds to 1-9; that stretch reads MAFNDLLQQ. The chain crosses the membrane as a helical span at residues 10 to 30; that stretch reads VGGVGRFQQIQVTLVVLPLLL. At 31–135 the chain is on the extracellular side; sequence MASHNTVQNF…LVCSHRALRQ (105 aa). Asn56, Asn92, and Asn113 each carry an N-linked (GlcNAc...) asparagine glycan. The chain crosses the membrane as a helical span at residues 136 to 156; it reads LAQSLYMVGVLLGAMVFGYLA. Over 157 to 164 the chain is Cytoplasmic; it reads DRLGRRKV. A helical transmembrane segment spans residues 165 to 187; that stretch reads LILNYLQTAVSGTCAAFAPNFPI. Residues 188-190 are Extracellular-facing; that stretch reads YCA. Residues 191–213 form a helical membrane-spanning segment; it reads FRLLSGMSLAGIALNCMTLNVEW. Topologically, residues 214-224 are cytoplasmic; it reads MPIHTRACVGT. The helical transmembrane segment at 225–245 threads the bilayer; it reads LIGYVYSLGQFLLAGVAYAVP. Residues 246–248 are Extracellular-facing; the sequence is HWR. Residues 249-269 traverse the membrane as a helical segment; sequence HLQLLISVPFFAFFIYSWFFI. Residues 270-337 lie on the Cytoplasmic side of the membrane; that stretch reads ESARWHSSSG…ELLRCPTLRH (68 aa). A helical membrane pass occupies residues 338 to 358; sequence LFLCLSMLWFATSFAYYGLVM. The Extracellular portion of the chain corresponds to 359-368; that stretch reads DLQGFGVSIY. A helical transmembrane segment spans residues 369–389; it reads LIQVIFGAVDLPAKLVGFLVI. Residues 390-395 lie on the Cytoplasmic side of the membrane; that stretch reads NSLGRR. Residues 396–416 traverse the membrane as a helical segment; it reads PAQMAALLLAGICILLNGVVP. Topologically, residues 417–425 are extracellular; it reads QDQSVIRTS. The chain crosses the membrane as a helical span at residues 426-446; sequence LAVLGKGCLAASFNCIFLYTG. The Cytoplasmic segment spans residues 447 to 456; the sequence is ELYPTMIRQT. A helical membrane pass occupies residues 457 to 477; sequence GLGMGSTMARVGSIVSPLVSM. Topologically, residues 478–484 are extracellular; sequence TTELYPS. Residues 485–505 traverse the membrane as a helical segment; it reads VPLFIYGAVPVAASAVTVLLP. The Cytoplasmic portion of the chain corresponds to 506-550; it reads ETLGQPLPDTVQDLESRKGKQTPQQQEHQKYMVPLQASAQEKNGL. The segment at 513–550 is disordered; it reads PDTVQDLESRKGKQTPQQQEHQKYMVPLQASAQEKNGL.

The protein belongs to the major facilitator (TC 2.A.1) superfamily. Organic cation transporter (TC 2.A.1.19) family. Glycosylated. Glycosylation is necessary for proper targeting of the transporter to the plasma membrane. Expressed in kidney; in the basolateral membrane of the proximal tubule.

The protein localises to the basolateral cell membrane. It is found in the basal cell membrane. It carries out the reaction (6R)-L-erythro-5,6,7,8-tetrahydrobiopterin(out) + a dicarboxylate(in) = (6R)-L-erythro-5,6,7,8-tetrahydrobiopterin(in) + a dicarboxylate(out). The enzyme catalyses L-erythro-7,8-dihydrobiopterin(out) + a dicarboxylate(in) = L-erythro-7,8-dihydrobiopterin(in) + a dicarboxylate(out). It catalyses the reaction L-sepiapterin(out) + a dicarboxylate(in) = L-sepiapterin(in) + a dicarboxylate(out). The catalysed reaction is prostaglandin F2alpha(out) + a dicarboxylate(in) = prostaglandin F2alpha(in) + a dicarboxylate(out). It carries out the reaction prostaglandin E2(out) + a dicarboxylate(in) = prostaglandin E2(in) + a dicarboxylate(out). The enzyme catalyses 3',5'-cyclic AMP(out) + a dicarboxylate(in) = 3',5'-cyclic AMP(in) + a dicarboxylate(out). It catalyses the reaction 3',5'-cyclic GMP(out) + a dicarboxylate(in) = 3',5'-cyclic GMP(in) + a dicarboxylate(out). The catalysed reaction is urate(out) + a dicarboxylate(in) = urate(in) + a dicarboxylate(out). It carries out the reaction kynurenate(out) + glutarate(in) = kynurenate(in) + glutarate(out). The enzyme catalyses (indol-3-yl)acetate(out) + a dicarboxylate(in) = (indol-3-yl)acetate(in) + a dicarboxylate(out). It catalyses the reaction indoxyl sulfate(out) + a dicarboxylate(in) = indoxyl sulfate(in) + a dicarboxylate(out). The catalysed reaction is N-benzoylglycine(out) + a dicarboxylate(in) = N-benzoylglycine(in) + a dicarboxylate(out). It carries out the reaction 3-carboxy-4-methyl-5-propyl-2-furanpropanoate(out) + a dicarboxylate(in) = 3-carboxy-4-methyl-5-propyl-2-furanpropanoate(in) + a dicarboxylate(out). Its function is as follows. Secondary active transporter that functions as a Na(+)-independent organic anion (OA)/dicarboxylate antiporter where the uptake of one molecule of OA into the cell is coupled with an efflux of one molecule of intracellular dicarboxylate such as 2-oxoglutarate or glutarate. Mediates the uptake of OA across the basolateral side of proximal tubule epithelial cells, thereby contributing to the renal elimination of endogenous OA from the systemic circulation into the urine. Functions as a biopterin transporters involved in the uptake and the secretion of coenzymes tetrahydrobiopterin (BH4), dihydrobiopterin (BH2) and sepiapterin to urine, thereby determining baseline levels of blood biopterins. Transports prostaglandin E2 (PGE2) and prostaglandin F2-alpha (PGF2-alpha) and may contribute to their renal excretion. Also mediates the uptake of cyclic nucleotides such as cAMP and cGMP. Involved in the transport of neuroactive tryptophan metabolites kynurenate (KYNA) and xanthurenate (XA) and may contribute to their secretion from the brain. May transport glutamate. Also involved in the disposition of uremic toxins and potentially toxic xenobiotics by the renal organic anion secretory pathway, helping reduce their undesired toxicological effects on the body. Uremic toxins include the indoxyl sulfate (IS), hippurate/N-benzoylglycine (HA), indole acetate (IA), 3-carboxy-4- methyl-5-propyl-2-furanpropionate (CMPF) and urate. Xenobiotics include the mycotoxin ochratoxin (OTA). May also contribute to the transport of organic compounds in testes across the blood-testis-barrier. This Macaca fascicularis (Crab-eating macaque) protein is Solute carrier family 22 member 6.